We begin with the raw amino-acid sequence, 185 residues long: Large ribosomal subunit protein uL5 (185 aa).

This sequence belongs to the universal ribosomal protein uL5 family. Part of the 50S ribosomal subunit; part of the 5S rRNA/L5/L18/L25 subcomplex. Contacts the 5S rRNA and the P site tRNA. Forms a bridge to the 30S subunit in the 70S ribosome.

Functionally, this is one of the proteins that bind and probably mediate the attachment of the 5S RNA into the large ribosomal subunit, where it forms part of the central protuberance. In the 70S ribosome it contacts protein S13 of the 30S subunit (bridge B1b), connecting the 2 subunits; this bridge is implicated in subunit movement. Contacts the P site tRNA; the 5S rRNA and some of its associated proteins might help stabilize positioning of ribosome-bound tRNAs. This is Large ribosomal subunit protein uL5 from Xanthobacter autotrophicus (strain ATCC BAA-1158 / Py2).